A 151-amino-acid polypeptide reads, in one-letter code: Small ribosomal subunit protein uS15 (151 aa).

This sequence belongs to the universal ribosomal protein uS15 family.

The chain is Small ribosomal subunit protein uS15 (RPS13) from Pisum sativum (Garden pea).